The chain runs to 466 residues: Cysteine--tRNA ligase (466 aa).

Cysteine 28 serves as a coordination point for Zn(2+). The 'HIGH' region motif lies at 30–40 (PTVYNYIHIGN). Zn(2+) is bound by residues cysteine 208, histidine 233, and glutamate 237. Positions 265–269 (KMSKS) match the 'KMSKS' region motif. Lysine 268 contacts ATP.

This sequence belongs to the class-I aminoacyl-tRNA synthetase family. In terms of assembly, monomer. It depends on Zn(2+) as a cofactor.

It localises to the cytoplasm. The enzyme catalyses tRNA(Cys) + L-cysteine + ATP = L-cysteinyl-tRNA(Cys) + AMP + diphosphate. The sequence is that of Cysteine--tRNA ligase from Staphylococcus saprophyticus subsp. saprophyticus (strain ATCC 15305 / DSM 20229 / NCIMB 8711 / NCTC 7292 / S-41).